An 83-amino-acid polypeptide reads, in one-letter code: Colicin-E5 immunity protein (83 aa).

This protein is able to protect a cell, which harbors the plasmid ColE5 encoding colicin E5, against colicin E5. The chain is Colicin-E5 immunity protein (imm) from Escherichia coli.